A 199-amino-acid polypeptide reads, in one-letter code: Large ribosomal subunit protein uL5 (199 aa).

The protein belongs to the universal ribosomal protein uL5 family. In terms of assembly, part of the 50S ribosomal subunit; part of the 5S rRNA/L5/L18/L25 subcomplex. Contacts the 5S rRNA and the P site tRNA. Forms a bridge to the 30S subunit in the 70S ribosome.

This is one of the proteins that bind and probably mediate the attachment of the 5S RNA into the large ribosomal subunit, where it forms part of the central protuberance. In the 70S ribosome it contacts protein S13 of the 30S subunit (bridge B1b), connecting the 2 subunits; this bridge is implicated in subunit movement. Contacts the P site tRNA; the 5S rRNA and some of its associated proteins might help stabilize positioning of ribosome-bound tRNAs. In Frankia casuarinae (strain DSM 45818 / CECT 9043 / HFP020203 / CcI3), this protein is Large ribosomal subunit protein uL5.